Consider the following 303-residue polypeptide: Protoheme IX farnesyltransferase (303 aa).

Helical transmembrane passes span 17–37, 42–62, 91–111, 114–134, 142–162, 168–188, 208–228, 231–251, and 270–290; these read GVVM…TEPA, LATF…SAAI, AAIT…YFLV, LTAW…TLYL, IVIG…AVTG, AWLL…ALAI, IPFT…CTLL, LTGM…LVFL, and FGYS…DHYL.

Belongs to the UbiA prenyltransferase family. Protoheme IX farnesyltransferase subfamily.

It is found in the cell inner membrane. It carries out the reaction heme b + (2E,6E)-farnesyl diphosphate + H2O = Fe(II)-heme o + diphosphate. Its pathway is porphyrin-containing compound metabolism; heme O biosynthesis; heme O from protoheme: step 1/1. Its function is as follows. Converts heme B (protoheme IX) to heme O by substitution of the vinyl group on carbon 2 of heme B porphyrin ring with a hydroxyethyl farnesyl side group. This is Protoheme IX farnesyltransferase from Alcanivorax borkumensis (strain ATCC 700651 / DSM 11573 / NCIMB 13689 / SK2).